A 589-amino-acid polypeptide reads, in one-letter code: Serine/threonine-protein phosphatase 2A 65 kDa regulatory subunit A alpha isoform (589 aa).

A2 is modified (N-acetylalanine). HEAT repeat units lie at residues 8–46 (DSLY…GVER), 47–84 (TRSE…GGPE), 85–123 (YVHC…SPSD), 124–161 (LEAH…VSSA), 162–200 (VKAE…ELDN), 201–239 (VKSE…PQED), 240–278 (LEAL…GPEI), 279–321 (TKTD…RENV), 322–360 (IMSQ…GKDN), 361–399 (TIEH…GIRQ), 400–438 (LSQS…GVEF), 439–477 (FDEK…GKEW), 478–516 (AHAT…GQDI), 517–555 (TTKH…DNST), and 556–589 (LQSE…LSLA). Residues 8–399 (DSLYPIAVLI…CVNEVIGIRQ (392 aa)) form a PP2A subunit B binding region. The interval 47–321 (TRSELLPFLT…NLSADCRENV (275 aa)) is polyoma small and medium T antigens Binding. The SV40 small T antigen binding stretch occupies residues 85 to 239 (YVHCLLPPLE…NIAQLLPQED (155 aa)). K280 is modified (N6-acetyllysine). Residues 400–589 (LSQSLLPAIV…QEALTVLSLA (190 aa)) form a PP2A subunit C binding region.

The protein belongs to the phosphatase 2A regulatory subunit A family. PP2A consists of a common heterodimeric core enzyme, composed of PPP2CA a 36 kDa catalytic subunit (subunit C) and PPP2R1A a 65 kDa constant regulatory subunit (PR65 or subunit A), that associates with a variety of regulatory subunits. Proteins that associate with the core dimer include three families of regulatory subunits B (the R2/B/PR55/B55, R3/B''/PR72/PR130/PR59 and R5/B'/B56 families), the 48 kDa variable regulatory subunit, viral proteins, and cell signaling molecules. Found in a complex with at least ARL2, PPP2CB, PPP2R1A, PPP2R2A, PPP2R5E and TBCD. Interacts with the PP2A C catalytic subunit PPP2CA. Interacts with the PP2A B subunit PPP2R2A. Interacts with the PP2A B subunit PPP2R5D. Interacts with FOXO1; the interaction dephosphorylates FOXO1 on AKT-mediated phosphorylation sites. Interacts with IPO9. Interacts with TP53 and SGO1. Interacts with PLA2G16; this interaction might decrease PP2A activity. Interacts with CTTNBP2NL. Interacts with GNA12; the interaction promotes protein phosphatase 2A activation causing dephosphorylation of MAPT. Interacts with CIP2A; this interaction stabilizes CIP2A. Interacts with PABIR1/FAM122A. Interacts with ADCY8; antagonizes interaction between ADCY8 and calmodulin. Interacts with CRTC3 (when phosphorylated at 'Ser-391'). Interacts with SPRY2. Part of the core of STRIPAK complexes composed of PP2A catalytic and scaffolding subunits, the striatins (PP2A regulatory subunits), the striatin-associated proteins MOB4, STRIP1 and STRIP2, PDCD10 and members of the STE20 kinases, such as STK24 and STK26. Component of the Integrator-PP2A (INTAC) complex, composed of the Integrator core complex and protein phosphatase 2A subunits PPP2CA and PPP2R1A. As to quaternary structure, (Microbial infection) Interacts with JC virus small t antigen; this interaction inhibits PPP2R1A activity.

The protein resides in the cytoplasm. The protein localises to the nucleus. It localises to the chromosome. Its subcellular location is the centromere. It is found in the lateral cell membrane. The protein resides in the cell projection. The protein localises to the dendrite. The PR65 subunit of protein phosphatase 2A serves as a scaffolding molecule to coordinate the assembly of the catalytic subunit and a variable regulatory B subunit. Upon interaction with GNA12 promotes dephosphorylation of microtubule associated protein TAU/MAPT. Required for proper chromosome segregation and for centromeric localization of SGO1 in mitosis. Together with RACK1 adapter, mediates dephosphorylation of AKT1 at 'Ser-473', preventing AKT1 activation and AKT-mTOR signaling pathway. Dephosphorylation of AKT1 is essential for regulatory T-cells (Treg) homeostasis and stability. Part of the striatin-interacting phosphatase and kinase (STRIPAK) complexes. STRIPAK complexes have critical roles in protein (de)phosphorylation and are regulators of multiple signaling pathways including Hippo, MAPK, nuclear receptor and cytoskeleton remodeling. Different types of STRIPAK complexes are involved in a variety of biological processes such as cell growth, differentiation, apoptosis, metabolism and immune regulation. Key mediator of a quality checkpoint during transcription elongation as part of the Integrator-PP2A (INTAC) complex. The INTAC complex drives premature transcription termination of transcripts that are unfavorably configured for transcriptional elongation: within the INTAC complex, acts as a scaffolding subunit for PPP2CA, which catalyzes dephosphorylation of the C-terminal domain (CTD) of Pol II subunit POLR2A/RPB1 and SUPT5H/SPT5, thereby preventing transcriptional elongation. Regulates the recruitment of the SKA complex to kinetochores. This is Serine/threonine-protein phosphatase 2A 65 kDa regulatory subunit A alpha isoform from Homo sapiens (Human).